The following is a 216-amino-acid chain: uncharacterized protein (216 aa).

The segment covering 182 to 193 (STSNASVNSDDA) has biased composition (polar residues). A disordered region spans residues 182-204 (STSNASVNSDDASTAELGPTSEE).

This is an uncharacterized protein from Caenorhabditis elegans.